The primary structure comprises 487 residues: NADH-quinone oxidoreductase subunit N (487 aa).

The next 13 membrane-spanning stretches (helical) occupy residues 7 to 27 (ILGP…LLMV), 38 to 58 (LVGL…GLGA), 79 to 99 (YAKA…MVWL), 111 to 131 (ILVL…DLIA), 164 to 184 (FVLG…VYGF), 207 to 227 (LLIG…AVPF), 238 to 258 (APTP…LTLF), 276 to 296 (VIIL…IVQT), 301 to 321 (LMAY…AAGT), 328 to 348 (VLVY…VILA), 373 to 393 (AAAM…AGFF), 406 to 426 (GLFA…FYYL), and 451 to 471 (VILI…SVVV).

Belongs to the complex I subunit 2 family. As to quaternary structure, NDH-1 is composed of 14 different subunits. Subunits NuoA, H, J, K, L, M, N constitute the membrane sector of the complex.

The protein resides in the cell inner membrane. The enzyme catalyses a quinone + NADH + 5 H(+)(in) = a quinol + NAD(+) + 4 H(+)(out). Functionally, NDH-1 shuttles electrons from NADH, via FMN and iron-sulfur (Fe-S) centers, to quinones in the respiratory chain. The immediate electron acceptor for the enzyme in this species is believed to be ubiquinone. Couples the redox reaction to proton translocation (for every two electrons transferred, four hydrogen ions are translocated across the cytoplasmic membrane), and thus conserves the redox energy in a proton gradient. The polypeptide is NADH-quinone oxidoreductase subunit N (Rhodospirillum rubrum (strain ATCC 11170 / ATH 1.1.1 / DSM 467 / LMG 4362 / NCIMB 8255 / S1)).